Reading from the N-terminus, the 353-residue chain is Photosystem II D2 protein (353 aa).

Threonine 2 is modified (N-acetylthreonine). Threonine 2 is subject to Phosphothreonine. Residues 41-61 (CAYFALGGWFTGTTFVTSWYT) form a helical membrane-spanning segment. Histidine 118 is a chlorophyll a binding site. The helical transmembrane segment at 125–141 (GFMLRQFELSRSVQLRP) threads the bilayer. 2 residues coordinate pheophytin a: glutamine 130 and asparagine 143. The helical transmembrane segment at 153-166 (VFVSVFLIYPLGQS) threads the bilayer. Histidine 198 lines the chlorophyll a pocket. A helical membrane pass occupies residues 208 to 228 (AALLCAIHGATVENTLFEDGD). Positions 215 and 262 each coordinate a plastoquinone. Histidine 215 lines the Fe cation pocket. Histidine 269 serves as a coordination point for Fe cation. A helical membrane pass occupies residues 279 to 295 (GLWMSALGVVGLALNLR).

Belongs to the reaction center PufL/M/PsbA/D family. In terms of assembly, PSII is composed of 1 copy each of membrane proteins PsbA, PsbB, PsbC, PsbD, PsbE, PsbF, PsbH, PsbI, PsbJ, PsbK, PsbL, PsbM, PsbT, PsbX, PsbY, PsbZ, Psb30/Ycf12, at least 3 peripheral proteins of the oxygen-evolving complex and a large number of cofactors. It forms dimeric complexes. It depends on The D1/D2 heterodimer binds P680, chlorophylls that are the primary electron donor of PSII, and subsequent electron acceptors. It shares a non-heme iron and each subunit binds pheophytin, quinone, additional chlorophylls, carotenoids and lipids. There is also a Cl(-1) ion associated with D1 and D2, which is required for oxygen evolution. The PSII complex binds additional chlorophylls, carotenoids and specific lipids. as a cofactor.

Its subcellular location is the plastid. It localises to the chloroplast thylakoid membrane. It carries out the reaction 2 a plastoquinone + 4 hnu + 2 H2O = 2 a plastoquinol + O2. In terms of biological role, photosystem II (PSII) is a light-driven water:plastoquinone oxidoreductase that uses light energy to abstract electrons from H(2)O, generating O(2) and a proton gradient subsequently used for ATP formation. It consists of a core antenna complex that captures photons, and an electron transfer chain that converts photonic excitation into a charge separation. The D1/D2 (PsbA/PsbD) reaction center heterodimer binds P680, the primary electron donor of PSII as well as several subsequent electron acceptors. D2 is needed for assembly of a stable PSII complex. The protein is Photosystem II D2 protein of Arabis hirsuta (Hairy rock-cress).